The primary structure comprises 331 residues: 4-hydroxythreonine-4-phosphate dehydrogenase (331 aa).

Substrate is bound by residues histidine 137 and threonine 138. Positions 167, 212, and 267 each coordinate a divalent metal cation. Positions 275, 284, and 293 each coordinate substrate.

Belongs to the PdxA family. Homodimer. Zn(2+) serves as cofactor. The cofactor is Mg(2+). It depends on Co(2+) as a cofactor.

The protein localises to the cytoplasm. It catalyses the reaction 4-(phosphooxy)-L-threonine + NAD(+) = 3-amino-2-oxopropyl phosphate + CO2 + NADH. Its pathway is cofactor biosynthesis; pyridoxine 5'-phosphate biosynthesis; pyridoxine 5'-phosphate from D-erythrose 4-phosphate: step 4/5. Functionally, catalyzes the NAD(P)-dependent oxidation of 4-(phosphooxy)-L-threonine (HTP) into 2-amino-3-oxo-4-(phosphooxy)butyric acid which spontaneously decarboxylates to form 3-amino-2-oxopropyl phosphate (AHAP). This chain is 4-hydroxythreonine-4-phosphate dehydrogenase, found in Yersinia enterocolitica serotype O:8 / biotype 1B (strain NCTC 13174 / 8081).